Here is a 1621-residue protein sequence, read N- to C-terminus: Lysophospholipase NTE1 (1621 aa).

Residues 1–12 (MSSIPTPPDANG) are Cytoplasmic-facing. A helical transmembrane segment spans residues 13 to 33 (NPLIALAVAVIYAILYVLQGV). Residues 34–59 (KYGVSLLTIGIPSCIVRMLQYSLTIS) are Lumenal-facing. A helical membrane pass occupies residues 60–80 (LGFPHLLALFAGALLALFFLI). Residues 81 to 1621 (RYRYLTRYAQ…RGNRLRRMSI (1541 aa)) lie on the Cytoplasmic side of the membrane. Disordered regions lie at residues 188–209 (PDAS…TRPS), 250–379 (EGEE…SVPR), 545–566 (QTAT…LDET), 648–667 (WNLN…QRDD), 711–735 (VSAL…GSTR), 772–791 (DDEA…GASG), and 839–870 (FRST…ERPF). Composition is skewed to low complexity over residues 195-209 (TPTP…TRPS) and 348-361 (RRSQ…RLNS). Residues 788–907 (GASG…GYLS) and 951–1070 (RLLS…IAGR) each bind a nucleoside 3',5'-cyclic phosphate. A compositionally biased stretch (polar residues) spans 839–867 (FRSTSSNQENPNSTPGSKHRQSSFGSSNE). The region spanning 1316–1480 (LVLGGGGARG…MDNTPIQPLR (165 aa)) is the PNPLA domain. The short motif at 1320 to 1325 (GGGARG) is the GXGXXG element. Residues 1347-1351 (GCSIG) carry the GXSXG motif. Ser-1349 serves as the catalytic Nucleophile. Asp-1467 acts as the Proton acceptor in catalysis. Positions 1467-1469 (DGG) match the DGA/G motif.

The protein belongs to the NTE family.

Its subcellular location is the endoplasmic reticulum membrane. It carries out the reaction a 1-acyl-sn-glycero-3-phosphocholine + H2O = sn-glycerol 3-phosphocholine + a fatty acid + H(+). With respect to regulation, inhibited by organophosphorus esters. Functionally, intracellular phospholipase B that catalyzes the double deacylation of phosphatidylcholine (PC) to glycerophosphocholine (GroPCho). Plays an important role in membrane lipid homeostasis. Responsible for the rapid PC turnover in response to inositol, elevated temperatures, or when choline is present in the growth medium. The protein is Lysophospholipase NTE1 (NTE1) of Cryptococcus neoformans var. neoformans serotype D (strain B-3501A) (Filobasidiella neoformans).